The sequence spans 382 residues: Dual-specificity RNA methyltransferase RlmN (382 aa).

Glu-96 serves as the catalytic Proton acceptor. One can recognise a Radical SAM core domain in the interval 102–342; sequence QGKRGTLCVS…VRTTRGEDID (241 aa). A disulfide bond links Cys-109 and Cys-345. [4Fe-4S] cluster contacts are provided by Cys-116, Cys-120, and Cys-123. Residues 170 to 171, Ser-202, 224 to 226, and Asn-302 each bind S-adenosyl-L-methionine; these read GE and SLH. The active-site S-methylcysteine intermediate is Cys-345.

Belongs to the radical SAM superfamily. RlmN family. The cofactor is [4Fe-4S] cluster.

It is found in the cytoplasm. It carries out the reaction adenosine(2503) in 23S rRNA + 2 reduced [2Fe-2S]-[ferredoxin] + 2 S-adenosyl-L-methionine = 2-methyladenosine(2503) in 23S rRNA + 5'-deoxyadenosine + L-methionine + 2 oxidized [2Fe-2S]-[ferredoxin] + S-adenosyl-L-homocysteine. The catalysed reaction is adenosine(37) in tRNA + 2 reduced [2Fe-2S]-[ferredoxin] + 2 S-adenosyl-L-methionine = 2-methyladenosine(37) in tRNA + 5'-deoxyadenosine + L-methionine + 2 oxidized [2Fe-2S]-[ferredoxin] + S-adenosyl-L-homocysteine. In terms of biological role, specifically methylates position 2 of adenine 2503 in 23S rRNA and position 2 of adenine 37 in tRNAs. m2A2503 modification seems to play a crucial role in the proofreading step occurring at the peptidyl transferase center and thus would serve to optimize ribosomal fidelity. The chain is Dual-specificity RNA methyltransferase RlmN from Pseudomonas syringae pv. syringae (strain B728a).